The chain runs to 313 residues: Ribosomal RNA small subunit methyltransferase H (313 aa).

Residues 35 to 37 (GGH), Asp-55, Phe-79, Asp-100, and Gln-107 contribute to the S-adenosyl-L-methionine site.

This sequence belongs to the methyltransferase superfamily. RsmH family.

It is found in the cytoplasm. The catalysed reaction is cytidine(1402) in 16S rRNA + S-adenosyl-L-methionine = N(4)-methylcytidine(1402) in 16S rRNA + S-adenosyl-L-homocysteine + H(+). In terms of biological role, specifically methylates the N4 position of cytidine in position 1402 (C1402) of 16S rRNA. The sequence is that of Ribosomal RNA small subunit methyltransferase H from Burkholderia pseudomallei (strain 1106a).